A 357-amino-acid polypeptide reads, in one-letter code: Glutamine synthetase root isozyme B (357 aa).

One can recognise a GS beta-grasp domain in the interval 19–99; sequence IIAEYIWVGG…VICDVYTPAG (81 aa). The region spanning 106–357 is the GS catalytic domain; that stretch reads KRYNAAKIFS…AETTILWKKS (252 aa).

It belongs to the glutamine synthetase family. In terms of assembly, homooctamer.

It is found in the cytoplasm. It catalyses the reaction L-glutamate + NH4(+) + ATP = L-glutamine + ADP + phosphate + H(+). The sequence is that of Glutamine synthetase root isozyme B (GS3B) from Pisum sativum (Garden pea).